We begin with the raw amino-acid sequence, 155 residues long: 2-C-methyl-D-erythritol 2,4-cyclodiphosphate synthase (155 aa).

A divalent metal cation contacts are provided by aspartate 9 and histidine 11. 4-CDP-2-C-methyl-D-erythritol 2-phosphate contacts are provided by residues 9–11 (DSH) and 35–36 (HS). Position 43 (histidine 43) interacts with a divalent metal cation. 57–59 (DIG) is a binding site for 4-CDP-2-C-methyl-D-erythritol 2-phosphate.

It belongs to the IspF family. In terms of assembly, homotrimer. A divalent metal cation serves as cofactor.

It carries out the reaction 4-CDP-2-C-methyl-D-erythritol 2-phosphate = 2-C-methyl-D-erythritol 2,4-cyclic diphosphate + CMP. It functions in the pathway isoprenoid biosynthesis; isopentenyl diphosphate biosynthesis via DXP pathway; isopentenyl diphosphate from 1-deoxy-D-xylulose 5-phosphate: step 4/6. Functionally, involved in the biosynthesis of isopentenyl diphosphate (IPP) and dimethylallyl diphosphate (DMAPP), two major building blocks of isoprenoid compounds. Catalyzes the conversion of 4-diphosphocytidyl-2-C-methyl-D-erythritol 2-phosphate (CDP-ME2P) to 2-C-methyl-D-erythritol 2,4-cyclodiphosphate (ME-CPP) with a corresponding release of cytidine 5-monophosphate (CMP). This Koribacter versatilis (strain Ellin345) protein is 2-C-methyl-D-erythritol 2,4-cyclodiphosphate synthase.